Here is a 412-residue protein sequence, read N- to C-terminus: MADTRPERRFTRIDRLPPYVFNITAELKMAARRRGEDIIDFSMGNPDGATPPHIVEKLCTVAQRPDTHGYSTSRGIPRLRRAISRWYQDRYDVEIDPESEAIVTIGSKEGLAHLMLATLDHGDTVLVPNPSYPIHIYGAVIAGAQVRSVPLVEGVDFFNELERAIRESYPKPKMMILGFPSNPTAQCVELEFFEKVVALAKRYDVLVVHDLAYADIVYDGWKAPSIMQVPGARDVAVEFFTLSKSYNMAGWRIGFMVGNKTLVSALARIKSYHDYGTFTPLQVAAIAALEGDQQCVRDIAEQYKRRRDVLVKGLHEAGWMVEMPKASMYVWAKIPEPYAAMGSLEFAKKLLNEAKVCVSPGIGFGDYGDTHVRFALIENRDRIRQAIRGIKAMFRADGLLPASSKHIHENAE.

The residue at position 244 (K244) is an N6-(pyridoxal phosphate)lysine.

It belongs to the class-I pyridoxal-phosphate-dependent aminotransferase family. Homodimer. Pyridoxal 5'-phosphate is required as a cofactor.

The protein localises to the cytoplasm. The catalysed reaction is L-alanine + 2-oxoglutarate = pyruvate + L-glutamate. It functions in the pathway amino-acid biosynthesis; L-alanine biosynthesis. In terms of biological role, involved in the biosynthesis of alanine. Catalyzes the transamination of pyruvate by glutamate, leading to the formation of L-alanine and 2-oxoglutarate. Is also able to catalyze the reverse reaction. The sequence is that of Glutamate-pyruvate aminotransferase AlaC from Escherichia coli (strain K12).